We begin with the raw amino-acid sequence, 381 residues long: Probable serine/threonine-protein kinase PBL21 (381 aa).

Cysteine 3 is lipidated: S-palmitoyl cysteine. A Protein kinase domain is found at 78–354 (FREVNLLGEG…GDIVVALEYL (277 aa)). ATP-binding positions include 84-92 (LGEGGFGRV) and lysine 106. Aspartate 204 (proton acceptor) is an active-site residue. The tract at residues 362-381 (EARNVSSPSPEISRTPRRDL) is disordered.

This sequence belongs to the protein kinase superfamily. Ser/Thr protein kinase family. In terms of processing, palmitoylation at Cys-3 and Cys-7 are required for plasma membrane location.

It is found in the cell membrane. It catalyses the reaction L-seryl-[protein] + ATP = O-phospho-L-seryl-[protein] + ADP + H(+). The enzyme catalyses L-threonyl-[protein] + ATP = O-phospho-L-threonyl-[protein] + ADP + H(+). Its function is as follows. May be involved in plant defense signaling. The sequence is that of Probable serine/threonine-protein kinase PBL21 from Arabidopsis thaliana (Mouse-ear cress).